The chain runs to 655 residues: Fidgetin-like protein 1 (655 aa).

Residues 289-313 (QQKKHSNQPQRNPGPLYGGGKKSLG) form a disordered region. Residues A385 and 425 to 430 (GTGKTL) contribute to the ATP site.

It belongs to the AAA ATPase family. Hexamer. Requires Mg(2+) as cofactor.

The protein resides in the nucleus. The protein localises to the cytoplasm. Its subcellular location is the perinuclear region. It catalyses the reaction ATP + H2O = ADP + phosphate + H(+). Functionally, may be involved in DNA double-strand break (DBS) repair via homologous recombination (HR). May regulate osteoblast proliferation and differentiation. The polypeptide is Fidgetin-like protein 1 (fignl1) (Xenopus laevis (African clawed frog)).